The primary structure comprises 403 residues: Heptahelical transmembrane protein ADIPOR3 (403 aa).

Over 1-73 the chain is Cytoplasmic; it reads MAAAAGEEVE…LSAFSIHNET (73 aa). A helical transmembrane segment spans residues 74 to 94; sequence LNVWTHLIGFFIFLVLTIYTA. Topologically, residues 95 to 209 are extracellular; sequence TQVPNVVDLQ…QLIRPIPRWP (115 aa). Residues 210-230 form a helical membrane-spanning segment; sequence FYAFLGGAMFCLLASSTCHLL. At 231–246 the chain is on the cytoplasmic side; that stretch reads SCHSRRLAYIMLRLDY. Residues 247 to 267 traverse the membrane as a helical segment; the sequence is AGIAALIATSFYPPVYYSFMC. The Extracellular segment spans residues 268 to 274; the sequence is YPFFCNL. Residues 275–295 form a helical membrane-spanning segment; sequence YLSCITILGVATIAFSLLPVF. At 296–306 the chain is on the cytoplasmic side; sequence QNPEFRTIRAC. A helical transmembrane segment spans residues 307–327; sequence LFFGMGASGVIPVIHKLILFW. Residues 328 to 331 lie on the Extracellular side of the membrane; that stretch reads HQPE. The chain crosses the membrane as a helical span at residues 332–352; sequence ALHTTAYEVLMGLFYGIGALV. Residues 353-374 lie on the Cytoplasmic side of the membrane; the sequence is YATRVPERWMPGKFDIAGHSHQ. A helical transmembrane segment spans residues 375-395; sequence LFHVLVVAGAYTHYHSGLVYL. Topologically, residues 396–403 are extracellular; it reads KWRDVQGC.

Belongs to the ADIPOR family.

It is found in the membrane. Functionally, may play a role in abiotic stress response. The sequence is that of Heptahelical transmembrane protein ADIPOR3 (ADIPOR3) from Oryza sativa subsp. japonica (Rice).